The following is a 330-amino-acid chain: Daunorubicin/doxorubicin resistance ATP-binding protein DrrA (330 aa).

The ABC transporter domain maps to 9 to 239; sequence IETSGLVKVY…LGSNVLRLRL (231 aa). 41–48 lines the ATP pocket; it reads GPNGAGKS.

It belongs to the ABC transporter superfamily. Drug exporter-1 (DrugE1) (TC 3.A.1.105) family. As to quaternary structure, the complex is composed of two ATP-binding proteins (DrrA) and two transmembrane proteins (DrrB).

The protein resides in the cell membrane. The enzyme catalyses daunorubicin(in) + ATP + H2O = daunorubicin(out) + ADP + phosphate + H(+). Its function is as follows. Part of the ABC transporter complex DrrAB involved in daunorubicin and doxorubicin resistance. Responsible for energy coupling to the transport system. Binds ATP or GTP. This is Daunorubicin/doxorubicin resistance ATP-binding protein DrrA (drrA) from Streptomyces peucetius.